Here is a 91-residue protein sequence, read N- to C-terminus: Small ribosomal subunit protein bS20 (91 aa).

Residues 1–25 (MANSPSAKKRAKQAEKRRSHNASLR) are disordered. A compositionally biased stretch (basic residues) spans 7 to 20 (AKKRAKQAEKRRSH).

It belongs to the bacterial ribosomal protein bS20 family.

Its function is as follows. Binds directly to 16S ribosomal RNA. In Azotobacter vinelandii (strain DJ / ATCC BAA-1303), this protein is Small ribosomal subunit protein bS20.